Reading from the N-terminus, the 830-residue chain is Post-transcriptional regulator MKT1 (830 aa).

Residue lysine 4 forms a Glycyl lysine isopeptide (Lys-Gly) (interchain with G-Cter in ubiquitin) linkage. The tract at residues 130 to 380 (RSRGWTQWNN…SPATTVTKNA (251 aa)) is interaction with PBP1. A disordered region spans residues 347-400 (DSEKNNKDGKKSNLSSPSSASSSASPATTVTKNASEKLTYEKSSTKEVRKPRDI). Phosphoserine is present on residues serine 358, serine 362, and serine 371. The segment covering 361-373 (SSPSSASSSASPA) has biased composition (low complexity). Residues 380–400 (ASEKLTYEKSSTKEVRKPRDI) show a composition bias toward basic and acidic residues.

The protein belongs to the XPG/RAD2 endonuclease family. Interacts (via C-terminus) with PBP1 (via C-terminus).

The protein localises to the cytoplasm. It localises to the cytosol. Involved in 3'-UTR mediated RNA regulation. Binds to RNA-binding and RNA regulatory proteins. Complexes with PAB1-binding protein to promote mRNA interactions with poly(A)-binding protein. Promotes mating-type switching in mother cells by positively regulating HO expression. This Saccharomyces cerevisiae (strain ATCC 204508 / S288c) (Baker's yeast) protein is Post-transcriptional regulator MKT1 (MKT1).